The following is a 96-amino-acid chain: Transcription and mRNA export factor SUS1 (96 aa).

Residue lysine 68 forms a Glycyl lysine isopeptide (Lys-Gly) (interchain with G-Cter in ubiquitin) linkage.

The protein belongs to the ENY2 family. Component of the nuclear pore complex (NPC)-associated TREX-2 complex (transcription and export complex 2), composed of at least SUS1, SAC3, THP1, SEM1, and CDC31. TREX-2 contains 2 SUS1 chains. The TREX-2 complex interacts with the nucleoporin NUP1. Component of the 1.8 MDa SAGA transcription coactivator-HAT complex. SAGA is built of 5 distinct domains with specialized functions. Within the SAGA complex, SUS1, SGF11, SGF73 and UBP8 form an additional subcomplex of SAGA called the DUB module (deubiquitination module). Interacts directly with THP1, SAC3, SGF11, and with the RNA polymerase II.

The protein resides in the nucleus. It is found in the nucleoplasm. The protein localises to the cytoplasm. Its subcellular location is the P-body. Involved in mRNA export coupled transcription activation by association with both the TREX-2 and the SAGA complexes. At the promoters, SAGA is required for recruitment of the basal transcription machinery. It influences RNA polymerase II transcriptional activity through different activities such as TBP interaction and promoter selectivity, interaction with transcription activators, and chromatin modification through histone acetylation and deubiquitination. Within the SAGA complex, participates in a subcomplex required for deubiquitination of H2B and for the maintenance of steady-state H3 methylation levels. The TREX-2 complex functions in docking export-competent ribonucleoprotein particles (mRNPs) to the nuclear entrance of the nuclear pore complex (nuclear basket). TREX-2 participates in mRNA export and accurate chromatin positioning in the nucleus by tethering genes to the nuclear periphery. May also be involved in cytoplasmic mRNA decay by interaction with components of P-bodies. The protein is Transcription and mRNA export factor SUS1 of Saccharomyces cerevisiae (strain YJM789) (Baker's yeast).